A 711-amino-acid polypeptide reads, in one-letter code: MATSSVSKGCFVFKPDFKKRKISVPIEDYFNNEELDSEDSKLRFETYRLLWQRIKSETEQLQEGLNENLFDNLVDFLQKSHSEFQKNSGNWGSQMRLREIPTAALILGVNVTDHDVIFRSLTETLHNNVTPYVVSLQAKDCPDVKHFLQKLTSELIDCCVDRNSKEEKNDKALRRTSYSMDSLSSWYSTVAQKTGPKMTSKKRATCSQWQSPPVVLILKNMESFSTKVLQDFIIISSQHLHEFPLILIFGIATSPVIIHRLLPHSVSSLLCIELFQSLSCKEHLTVVLDKLLLTPQFPFKLSKKALQVLTNIFLYHDFSIQNFIKGLKLSLLEHFYSQPLSVLCCDLSEAKKRINVFSVNQCEKIRRLPSFRRYVENQPLEKQVALLTNETFLKEETQSLLEDLHVYHINYFLVLRCLHNFTSSLPKYPLGRQIRELYCTCLEKKIWDSEEYESALQLLRMLAKDELMGILEQCVKVLNSSTEKQLSNTAQKIKGFLTQFQNLDDSKEEEDACGSQPKGLQKTDLYHLQKSLLEMKELRRTTKKPTKFEMLRENVINFIDNLVRDYLLPPEGQPLHEVVYFSAANTLREHLNAAPRIALHTALNNPYYYLKNEALKSEEGCIPSVAPDICIAYKLHLECSRLINLVDWSEAFATVVTAAEKMDTNSTVSEEMSEIIHARFIRAVSELELLGFIKPTKQKTDHVARLTWGGC.

A phosphoserine mark is found at S23 and S515.

This sequence belongs to the ORC3 family. In terms of assembly, component of ORC, a complex composed of at least 6 subunits: ORC1, ORC2, ORC3, ORC4, ORC5 and ORC6. ORC is regulated in a cell-cycle dependent manner. It is sequentially assembled at the exit from anaphase of mitosis and disassembled as cells enter S phase. In terms of processing, multi-mono-ubiquitinated by OBI1; ubiquitination is important for efficient DNA replication origin site activation. Ubiquitination levels are low in mitotic and early G1-phAse cells and are induced in late G1-/early S-phase, peaking in S-phase and decrease toward the end of the cell cycle.

It localises to the nucleus. Its subcellular location is the chromosome. In terms of biological role, component of the origin recognition complex (ORC) that binds origins of replication. DNA-binding is ATP-dependent. The specific DNA sequences that define origins of replication have not been identified yet. ORC is required to assemble the pre-replication complex necessary to initiate DNA replication. Binds histone H3 and H4 trimethylation marks H3K9me3, H3K27me3 and H4K20me3. In Rattus norvegicus (Rat), this protein is Origin recognition complex subunit 3 (Orc3).